The chain runs to 375 residues: MTSVLIERIEAIIVHDLPTIRPPHKLAMHTMQTQTLVLIRVRCSDGVEGIGEATTIGGLAYGYESPEGIKANIDAHLAPALVGLPADNINAAMLKLDKLAKGNTFAKSGIESALLDAQGKRLGLPVSELLGGRVRDSLEVAWTLASGDTARDIAEAQHMLEIRRHRVFKLKIGANPLAQDLKHVVAIKRELGDSASVRVDVNQYWDESQAIRACQVLGDNGIDLIEQPISRINRSGQVRLNQRSPAPIMADESIESVEDAFSLAADGAASIFALKIAKNGGPRAVLRTAQIAEAAGIALYGGTMLEGSIGTLASAHAFLTLRQLTWGTELFGPLLLTEEIVNEPPQYRDFQLHIPRTPGLGLTLDEQRLARFARR.

Lys171 serves as the catalytic Proton acceptor. Residues Asp200, Glu226, and Asp251 each coordinate Mn(2+). The active-site Proton donor is Glu329.

This sequence belongs to the mandelate racemase/muconate lactonizing enzyme family. Homooctamer. Mn(2+) serves as cofactor.

It catalyses the reaction (S)-muconolactone = cis,cis-muconate + H(+). It functions in the pathway aromatic compound metabolism; beta-ketoadipate pathway; 5-oxo-4,5-dihydro-2-furylacetate from catechol: step 2/3. Functionally, catalyzes a syn cycloisomerization. In Pseudomonas putida (Arthrobacter siderocapsulatus), this protein is Muconate cycloisomerase 1 (catB).